A 322-amino-acid polypeptide reads, in one-letter code: Protein-methionine-sulfoxide reductase catalytic subunit MsrP (322 aa).

A signal peptide (tat-type signal) is located at residues 1-59; the sequence is MSFRDALNLPSSEITDESVYRDRRRLLQLLALTPALGVAGCAEADPPPPPKTVVTPAQA. Mo-molybdopterin contacts are provided by residues Asn79, 82–83, Cys137, Thr172, Asn220, Arg225, and 236–238; these read YE and SIK.

Belongs to the MsrP family. Heterodimer of a catalytic subunit (MsrP) and a heme-binding subunit (MsrQ). Mo-molybdopterin serves as cofactor. Predicted to be exported by the Tat system. The position of the signal peptide cleavage has not been experimentally proven.

The protein resides in the periplasm. The enzyme catalyses L-methionyl-[protein] + a quinone + H2O = L-methionyl-(S)-S-oxide-[protein] + a quinol. It catalyses the reaction L-methionyl-[protein] + a quinone + H2O = L-methionyl-(R)-S-oxide-[protein] + a quinol. Part of the MsrPQ system that repairs oxidized periplasmic proteins containing methionine sulfoxide residues (Met-O), using respiratory chain electrons. Thus protects these proteins from oxidative-stress damage caused by reactive species of oxygen and chlorine generated by the host defense mechanisms. MsrPQ is essential for the maintenance of envelope integrity under bleach stress, rescuing a wide series of structurally unrelated periplasmic proteins from methionine oxidation. The catalytic subunit MsrP is non-stereospecific, being able to reduce both (R-) and (S-) diastereoisomers of methionine sulfoxide. The polypeptide is Protein-methionine-sulfoxide reductase catalytic subunit MsrP (Xanthomonas axonopodis pv. citri (strain 306)).